Consider the following 897-residue polypeptide: Alanine--tRNA ligase (897 aa).

Zn(2+) contacts are provided by H581, H585, C684, and H688.

The protein belongs to the class-II aminoacyl-tRNA synthetase family. It depends on Zn(2+) as a cofactor.

The protein localises to the cytoplasm. The catalysed reaction is tRNA(Ala) + L-alanine + ATP = L-alanyl-tRNA(Ala) + AMP + diphosphate. In terms of biological role, catalyzes the attachment of alanine to tRNA(Ala) in a two-step reaction: alanine is first activated by ATP to form Ala-AMP and then transferred to the acceptor end of tRNA(Ala). Also edits incorrectly charged Ser-tRNA(Ala) and Gly-tRNA(Ala) via its editing domain. This chain is Alanine--tRNA ligase, found in Mycobacterium sp. (strain KMS).